A 444-amino-acid chain; its full sequence is C4-dicarboxylate transport protein (444 aa).

The next 9 membrane-spanning stretches (helical) occupy residues 18 to 40 (FYSH…GHFY), 53 to 75 (AFIK…TGIA), 90 to 112 (AMLY…ANVV), 142 to 159 (IVGF…GAFA), 163 to 180 (ILQV…LAMV), 201 to 222 (LVAI…FTIG), 232 to 254 (LAML…LGAV), 327 to 349 (LFIA…LLVA), and 364 to 386 (FITL…ALIL).

The protein belongs to the dicarboxylate/amino acid:cation symporter (DAACS) (TC 2.A.23) family.

The protein localises to the cell inner membrane. In terms of biological role, responsible for the transport of dicarboxylates such as succinate, fumarate, and malate from the periplasm across the inner membrane. This transport system plays an important role in the energy supply of rhizobium-legume symbionts. The sequence is that of C4-dicarboxylate transport protein (dctA) from Rhizobium leguminosarum.